The primary structure comprises 379 residues: MTSNSGSTALRDARRIVVKVGSSLVTNEGRGLDEAAIGEWCRQLAVLVQGGREVVMVSSGAIAEGMKRLGWRTRPHEVHELQAAAAVGQMGLAQMYETKLRENRIGSAQVLLTHADLADRERYLNARSTLVTLLGLGVVPVINENDTVVNDEIKFGDNDTLGALVANLVEADALVILTDQKGLYTADPRKDPQAKFVHEAAAGDPALEAMAGGAGSSLGRGGMITKILAAKRAAGSGASTVIAWGREPDALLRLVRGESIGTLLVAQTAKHQARKRWMADHLQLRGAVTVDAGAAAKVRAEGKSLLPIGMTGVSGEFSRGDVIAVRDADGVELARGLANYSSVEARLLCRKPSSEFERLLGYVAEPEMVHRDNMVLMRG.

Position 19 (lysine 19) interacts with ATP. Substrate contacts are provided by serine 59, aspartate 146, and asparagine 158. 178-179 (TD) is an ATP binding site. Residues 285–363 (RGAVTVDAGA…SEFERLLGYV (79 aa)) form the PUA domain.

This sequence belongs to the glutamate 5-kinase family.

The protein localises to the cytoplasm. It carries out the reaction L-glutamate + ATP = L-glutamyl 5-phosphate + ADP. It participates in amino-acid biosynthesis; L-proline biosynthesis; L-glutamate 5-semialdehyde from L-glutamate: step 1/2. Functionally, catalyzes the transfer of a phosphate group to glutamate to form L-glutamate 5-phosphate. The polypeptide is Glutamate 5-kinase (Variovorax paradoxus (strain S110)).